The sequence spans 140 residues: uncharacterized protein (140 aa).

This is an uncharacterized protein from Xylella fastidiosa (strain Temecula1 / ATCC 700964).